A 270-amino-acid chain; its full sequence is Proteasome subunit alpha (270 aa).

The interval 229–270 (LLDTEAAGSTPTDAPSDTEDGDSTDGTDRADGTTDSTEETEK) is disordered. Residues 244-253 (SDTEDGDSTD) show a composition bias toward acidic residues.

The protein belongs to the peptidase T1A family. The 20S proteasome core is composed of 14 alpha and 14 beta subunits that assemble into four stacked heptameric rings, resulting in a barrel-shaped structure. The two inner rings, each composed of seven catalytic beta subunits, are sandwiched by two outer rings, each composed of seven alpha subunits. The catalytic chamber with the active sites is on the inside of the barrel. Has a gated structure, the ends of the cylinder being occluded by the N-termini of the alpha-subunits. Is capped by the proteasome-associated ATPase, ARC.

Its subcellular location is the cytoplasm. It participates in protein degradation; proteasomal Pup-dependent pathway. With respect to regulation, the formation of the proteasomal ATPase ARC-20S proteasome complex, likely via the docking of the C-termini of ARC into the intersubunit pockets in the alpha-rings, may trigger opening of the gate for substrate entry. Interconversion between the open-gate and close-gate conformations leads to a dynamic regulation of the 20S proteasome proteolysis activity. Functionally, component of the proteasome core, a large protease complex with broad specificity involved in protein degradation. The protein is Proteasome subunit alpha of Streptomyces griseus subsp. griseus (strain JCM 4626 / CBS 651.72 / NBRC 13350 / KCC S-0626 / ISP 5235).